The sequence spans 448 residues: Death-associated protein kinase 3 (448 aa).

Positions tyrosine 13–isoleucine 275 constitute a Protein kinase domain. Residues leucine 19 to valine 27 and lysine 42 contribute to the ATP site. The Proton acceptor role is filled by aspartate 139. An activation segment region spans residues aspartate 161 to glycine 204. 2 positions are modified to phosphothreonine: threonine 180 and threonine 225. A Phosphothreonine; by autocatalysis modification is found at threonine 265. A Phosphothreonine; by ROCK1 modification is found at threonine 265. Residue serine 304 is modified to Phosphoserine; by DAPK1. Residue serine 306 is modified to Phosphoserine; by autocatalysis and DAPK1. A phosphoserine; by DAPK1 mark is found at serine 307, serine 313, and serine 321. Residues alanine 390–arginine 448 form an interaction with CDC5L region. The segment at valine 422 to leucine 436 is leucine-zipper.

This sequence belongs to the protein kinase superfamily. CAMK Ser/Thr protein kinase family. DAP kinase subfamily. Homooligomer in its kinase-active form (homotrimers and homodimers are reported); monomeric in its kinase-inactive form. Homodimerization is required for activation segment autophosphorylation. Interacts with DAXX, PAWR, ATF4, NLK, TCF7L2, UBE2D1, UBE2D2, UBE2D3, and CDC5L. Interacts with AR; enhanced by AATF. Interacts with LUZP1; the interaction is likely to occur throughout the cell cycle and reduces the LUZP1-mediated suppression of MYL9 phosphorylation. Requires Mg(2+) as cofactor. Ubiquitinated. Ubiquitination mediated by the UBE2D3 E3 ligase does not lead to proteasomal degradation, but influences promyelocytic leukemia protein nuclear bodies (PML-NBs) formation in the nucleus. In terms of processing, the phosphorylation status is critical for kinase activity, oligomerization and intracellular localization. Phosphorylation at Thr-180, Thr-225 and Thr-265 is essential for activity. The phosphorylated form is localized in the cytoplasm and nuclear translocation or retention is maximal when it is not phosphorylated. Phosphorylation increases the trimeric form, and its dephosphorylation favors a kinase-inactive monomeric form. Highly expressed in heart, brain, lung, skeletal muscle, kidney and testis. Lower levels in liver and spleen.

Its subcellular location is the nucleus. It localises to the PML body. The protein localises to the cytoplasm. The protein resides in the cytoskeleton. It is found in the microtubule organizing center. Its subcellular location is the centrosome. It localises to the chromosome. The protein localises to the centromere. The protein resides in the spindle. It is found in the midbody. The catalysed reaction is L-seryl-[protein] + ATP = O-phospho-L-seryl-[protein] + ADP + H(+). It catalyses the reaction L-threonyl-[protein] + ATP = O-phospho-L-threonyl-[protein] + ADP + H(+). A sequential activation is proposed: autophosphorylation at consensus sites is leading to dimerization of the catalytic domain and activation segment exchange (producing an active confirmation of both kinase modules in trans) followed by phosphorylation at Thr-180 in the activation segment and at other regulatory sites. Phosphorylation at Thr-180, Thr-225 and Thr-265 is essential for activity. Inhibited by pyridone 6 (K00225), a potent, ATP-competitive inhibitor. Phosphorylation at Thr-180, Thr-225 and Thr-265 is essential for activity. In terms of biological role, serine/threonine kinase which is involved in the regulation of apoptosis, autophagy, transcription, translation and actin cytoskeleton reorganization. Regulates both type I (caspase-dependent) apoptotic and type II (caspase-independent) autophagic cell deaths signal, depending on the cellular setting. Involved in formation of promyelocytic leukemia protein nuclear body (PML-NB). Involved in apoptosis involving PAWR which mediates cytoplasmic relocation; in vitro phosphorylates PAWR. Regulates myosin phosphorylation in both smooth muscle and non-muscle cells. In smooth muscle, regulates myosin either directly by phosphorylating MYL12B and MYL9 or through inhibition of smooth muscle myosin phosphatase (SMPP1M) via phosphorylation of PPP1R12A; the inhibition of SMPP1M functions to enhance muscle responsiveness to Ca(2+) and promote a contractile state. Phosphorylates MYL12B in non-muscle cells leading to reorganization of actin cytoskeleton such as in regulation of cell polarity and cell migration. Positively regulates canonical Wnt/beta-catenin signaling through interaction with NLK and TCF7L2; disrupts the NLK-TCF7L2 complex thereby influencing the phosphorylation of TCF7L2 by NLK. Phosphorylates STAT3 and enhances its transcriptional activity. Enhances transcription from AR-responsive promoters in a hormone- and kinase-dependent manner. Phosphorylates histone H3 on 'Thr-11' at centromeres during mitosis. Phosphorylates RPL13A on 'Ser-77' upon interferon-gamma activation which is causing RPL13A release from the ribosome, RPL13A association with the GAIT complex and its subsequent involvement in transcript-selective translation inhibition. The chain is Death-associated protein kinase 3 (Dapk3) from Mus musculus (Mouse).